Consider the following 325-residue polypeptide: Secreted frizzled-related protein 3 (325 aa).

An N-terminal signal peptide occupies residues Met1–Ala32. Residues Ala33–Pro150 enclose the FZ domain. 5 disulfide bridges follow: Cys35–Cys96, Cys43–Cys89, Cys80–Cys119, Cys108–Cys147, and Cys112–Cys136. A glycan (N-linked (GlcNAc...) asparagine) is linked at Asn49. Residues Cys178 to Leu298 form the NTR domain. Residues Gly297–Asn325 form a disordered region. A compositionally biased stretch (low complexity) spans Ser299–Ser314. The segment covering Gly315–Asn325 has biased composition (polar residues).

It belongs to the secreted frizzled-related protein (sFRP) family. Interacts with MYOC. As to expression, expressed primarily in the cartilaginous cores of the long bone during embryonic and fetal development and in the appendicular skeleton (6-13 weeks). At 13 weeks of gestation, transcripts were present in early chondroblasts of the tarsal bones of the foot, the carpal bones of the hands and the epiphysis of long bones. Highly expressed in placenta and heart, followed by brain, skeletal muscle, kidney and pancreas. Weakly expressed in lung and liver.

It localises to the secreted. In terms of biological role, soluble frizzled-related proteins (sFRPS) function as modulators of Wnt signaling through direct interaction with Wnts. They have a role in regulating cell growth and differentiation in specific cell types. SFRP3/FRZB appears to be involved in limb skeletogenesis. Antagonist of Wnt8 signaling. Regulates chondrocyte maturation and long bone development. This is Secreted frizzled-related protein 3 (FRZB) from Homo sapiens (Human).